Consider the following 211-residue polypeptide: Small ribosomal subunit protein uS4 (211 aa).

In terms of domain architecture, S4 RNA-binding spans 98–161 (RRLDNVVYRL…RDIPFIKENL (64 aa)).

Belongs to the universal ribosomal protein uS4 family. As to quaternary structure, part of the 30S ribosomal subunit. Contacts protein S5. The interaction surface between S4 and S5 is involved in control of translational fidelity.

In terms of biological role, one of the primary rRNA binding proteins, it binds directly to 16S rRNA where it nucleates assembly of the body of the 30S subunit. With S5 and S12 plays an important role in translational accuracy. This is Small ribosomal subunit protein uS4 from Aquifex aeolicus (strain VF5).